The sequence spans 241 residues: Probable transcriptional regulatory protein Mpe_A1337 (241 aa).

The disordered stretch occupies residues 1 to 20 (MAGHSKWANIQHRKGRQDEK).

The protein belongs to the TACO1 family.

The protein localises to the cytoplasm. The protein is Probable transcriptional regulatory protein Mpe_A1337 of Methylibium petroleiphilum (strain ATCC BAA-1232 / LMG 22953 / PM1).